The primary structure comprises 319 residues: NADH-quinone oxidoreductase subunit H 1 (319 aa).

9 consecutive transmembrane segments (helical) span residues 1 to 21 (MIGLIITAIISAVLIMALLVV), 77 to 97 (ILAPAIAATPVLAGFGVVAFG), 107 to 127 (VGVLFLLGMMGLTAYAAMLGA), 147 to 167 (LAYEVFLGLSLMGAVMLAGSL), 179 to 199 (VWFVVLQPLGAALFCIAGVAA), 214 to 234 (LVAGFITEYTGMSFGLFFLGE), 238 to 258 (VLLVSALAVTLFFGGWLGPWL), 262 to 282 (IWFGLKTAVIAVVFVWLRATL), and 293 to 313 (FAWKIALPLSLLNLLLTGIVV).

This sequence belongs to the complex I subunit 1 family. As to quaternary structure, NDH-1 is composed of 14 different subunits. Subunits NuoA, H, J, K, L, M, N constitute the membrane sector of the complex.

Its subcellular location is the cell inner membrane. It carries out the reaction a quinone + NADH + 5 H(+)(in) = a quinol + NAD(+) + 4 H(+)(out). Its function is as follows. NDH-1 shuttles electrons from NADH, via FMN and iron-sulfur (Fe-S) centers, to quinones in the respiratory chain. The immediate electron acceptor for the enzyme in this species is believed to be ubiquinone. Couples the redox reaction to proton translocation (for every two electrons transferred, four hydrogen ions are translocated across the cytoplasmic membrane), and thus conserves the redox energy in a proton gradient. This subunit may bind ubiquinone. In Rhodopseudomonas palustris (strain HaA2), this protein is NADH-quinone oxidoreductase subunit H 1.